Here is a 206-residue protein sequence, read N- to C-terminus: Small ribosomal subunit protein uS4 (206 aa).

The 61-residue stretch at Cys-96–Val-156 folds into the S4 RNA-binding domain.

It belongs to the universal ribosomal protein uS4 family. Part of the 30S ribosomal subunit. Contacts protein S5. The interaction surface between S4 and S5 is involved in control of translational fidelity.

In terms of biological role, one of the primary rRNA binding proteins, it binds directly to 16S rRNA where it nucleates assembly of the body of the 30S subunit. Functionally, with S5 and S12 plays an important role in translational accuracy. The chain is Small ribosomal subunit protein uS4 from Pseudomonas fluorescens (strain ATCC BAA-477 / NRRL B-23932 / Pf-5).